Reading from the N-terminus, the 323-residue chain is Viral cathepsin (323 aa).

A signal peptide spans 1–16 (MNKILFYLFVYGVVNS). A propeptide spans 17 to 112 (AAYDLLKAPN…IVLDQPPGKG (96 aa)) (activation peptide). Cystine bridges form between C133/C174, C167/C207, and C262/C310. The active site involves C136. Residue N158 is glycosylated (N-linked (GlcNAc...) asparagine; by host). Active-site residues include H269 and N289.

This sequence belongs to the peptidase C1 family. As to quaternary structure, interacts with chitinase/CHIA; this interaction maintains VCATH in the host endoplasmic reticulum. Post-translationally, synthesized as an inactive proenzyme and activated by proteolytic removal of the inhibitory propeptide.

The protein resides in the host endoplasmic reticulum. It catalyses the reaction Endopeptidase of broad specificity, hydrolyzing substrates of both cathepsin L and cathepsin B.. Its function is as follows. Cysteine protease that plays an essential role in host liquefaction to facilitate horizontal transmission of the virus. Accumulates within infected cells as an inactive proenzyme (proV-CATH), which is activated by proteolytic cleavage upon cell death. This Lepidoptera (butterflies and moths) protein is Viral cathepsin (VCATH).